A 49-amino-acid polypeptide reads, in one-letter code: Large ribosomal subunit protein bL33 (49 aa).

The protein belongs to the bacterial ribosomal protein bL33 family.

The sequence is that of Large ribosomal subunit protein bL33 from Caldanaerobacter subterraneus subsp. tengcongensis (strain DSM 15242 / JCM 11007 / NBRC 100824 / MB4) (Thermoanaerobacter tengcongensis).